The primary structure comprises 479 residues: MAGFRLTTKVQVSGWRFLLRRVEHAIVRRDTRMFDDPLQFYSRAVFAGVVVSVLICLGAALMAYFKPLGKQGSDQLLVDRTTNQLYVMLPGSNQLRPVYNLTSARLVLGNASNPVAVKSEELNRISKGQSIGIPGAPYATPTGTPASQWTLCDTVAKPDSSAPKVETSILIRTLAIDSGVGPIRADQGMLVSYEGANWLITEGGRHSIDLADRAVTSAVGIPVTAKPTPISQGLFNALPNRGPWQLPQIPAAGAPNSVGLPENLVIGSVFRTATESDPQHYVVLPDGVARVNNTTAAALRATNSYGLMQPPAVEASVVAKIPEQVYVSPLPDQPLDVLLRQDSPVLCWSWQREPGDQAPKTTVIAGRRLPLPASAIGTGIDQIGGDSTVYIEGGQFVRLQSPDPRVGESMYYIDPQGVRYGIANDDAAKNLGLAGPVNAPWQVVGLLVDGPVLSKEAALIEHDTLPADPNPRKVASGEG.

Over 1–44 (MAGFRLTTKVQVSGWRFLLRRVEHAIVRRDTRMFDDPLQFYSRA) the chain is Cytoplasmic. The chain crosses the membrane as a helical span at residues 45 to 65 (VFAGVVVSVLICLGAALMAYF). Residues 66 to 479 (KPLGKQGSDQ…NPRKVASGEG (414 aa)) lie on the Periplasmic side of the membrane. A disulfide bridge links cysteine 152 with cysteine 347.

The protein belongs to the EccB family. Part of the ESX-1 / type VII secretion system (T7SS), which is composed of cytosolic and membrane components. The ESX-1 membrane complex is composed of EccB1, EccCa1, EccCb1, EccD1 and EccE1.

The protein resides in the cell inner membrane. Its function is as follows. An ATPase. Part of the ESX-1 / type VII specialized secretion system (T7SS), which exports several proteins including EsxA and EsxB. Plays a role in DNA conjugation, in both donor and recipient strains. This Mycolicibacterium smegmatis (strain MKD8) (Mycobacterium smegmatis) protein is ESX-1 secretion system ATPase EccB1.